Consider the following 100-residue polypeptide: Urease subunit gamma (100 aa).

This sequence belongs to the urease gamma subunit family. In terms of assembly, heterotrimer of UreA (gamma), UreB (beta) and UreC (alpha) subunits. Three heterotrimers associate to form the active enzyme.

It is found in the cytoplasm. It catalyses the reaction urea + 2 H2O + H(+) = hydrogencarbonate + 2 NH4(+). Its pathway is nitrogen metabolism; urea degradation; CO(2) and NH(3) from urea (urease route): step 1/1. This chain is Urease subunit gamma, found in Synechococcus sp. (strain CC9605).